The primary structure comprises 58 residues: Conotoxin Leo-T2 (58 aa).

A signal peptide spans 1-22 (MRCLPVFIILPLLIPSAPSVDA). Residues 23-47 (QPMTEDDVPLASFHEQTLQELWNKR) constitute a propeptide that is removed on maturation.

This sequence belongs to the conotoxin T superfamily. Contains 2 disulfide bonds that can be either 'C1-C3, C2-C4' or 'C1-C4, C2-C3', since these disulfide connectivities have been observed for conotoxins with cysteine framework V (for examples, see AC P0DQQ7 and AC P81755). Expressed by the venom duct.

Its subcellular location is the secreted. The polypeptide is Conotoxin Leo-T2 (Conus leopardus (Leopard cone)).